We begin with the raw amino-acid sequence, 571 residues long: Fumarate reductase (cytochrome) (571 aa).

20 residues coordinate heme c: histidine 8, cysteine 14, cysteine 17, histidine 18, cysteine 36, cysteine 39, histidine 40, histidine 52, histidine 58, histidine 61, cysteine 68, cysteine 71, histidine 72, alanine 74, histidine 75, cysteine 82, cysteine 85, histidine 86, asparagine 91, and tyrosine 94. The interval alanine 118–asparagine 571 is flavoprotein-like. 9 residues coordinate FAD: alanine 137, glutamate 156, asparagine 164, alanine 165, alanine 169, glycine 170, glycine 171, glycine 278, and glutamine 338. Glycine 170 lines the succinate pocket. Positions 365, 377, and 378 each coordinate succinate. 3 residues coordinate fumarate: threonine 377, glutamate 378, and arginine 402. The active-site Proton donor is arginine 402. Residue lysine 431 coordinates heme c. Position 504 (histidine 504) interacts with succinate. Histidine 504 contributes to the fumarate binding site. FAD-binding residues include histidine 505 and glutamate 534. 2 residues coordinate succinate: arginine 544 and glycine 547. Arginine 544 and glycine 547 together coordinate fumarate. 2 residues coordinate FAD: alanine 549 and isoleucine 550.

Monomer. FAD is required as a cofactor. The cofactor is heme c.

It localises to the periplasm. The enzyme catalyses 2 Fe(III)-[cytochrome c] + succinate = fumarate + 2 Fe(II)-[cytochrome c] + 2 H(+). In terms of biological role, flavocytochrome that catalyzes the reduction of fumarate to succinate. Is essential for fumarate respiration during anaerobic growth, acting as the terminal reductase. Receives electrons from the membrane-bound tetraheme c-type cytochrome CymA. In vitro, can use the artificial electron donor methyl viologen. The protein is Fumarate reductase (cytochrome) (fccA) of Shewanella frigidimarina.